A 923-amino-acid polypeptide reads, in one-letter code: Progesterone receptor (923 aa).

Positions 1-11 are enriched in basic and acidic residues; that stretch reads MTELQAKDPRT. The interval 1-49 is disordered; sequence MTELQAKDPRTLHTSGAAPSPTHVGSPLLARLDPDPFQGSQHSDASSVV. The tract at residues 1–164 is AF3; mediates transcriptional activation (in isoform B); that stretch reads MTELQAKDPR…PATKGLLSPL (164 aa). Residues 1–556 form a modulating, Pro-Rich region; the sequence is MTELQAKDPR…YGFDSLPQKI (556 aa). A Glycyl lysine isopeptide (Lys-Gly) (interchain with G-Cter in SUMO) cross-link involves residue lysine 7. Serine 20 is modified (phosphoserine). Polar residues predominate over residues 38-49; the sequence is QGSQHSDASSVV. The short motif at 56–60 is the LXXL motif 1 element; it reads LDRLL. The disordered stretch occupies residues 67 to 111; that stretch reads AQELPDEKTQNQQSLSDVEGAFSGVEASRRRSRNPRAPEKDSRLL. Serine 82 bears the Phosphoserine mark. Positions 115–119 match the LXXL motif 2 motif; it reads LDTLL. Serine 130 and serine 162 each carry phosphoserine. Positions 152-239 are disordered; the sequence is RSVPATKGLL…EGSAGPLLKS (88 aa). The segment at 165 to 304 is mediates transcriptional transrepression (in isoform A); the sequence is MSRPESKAGD…LATTVVDFIH (140 aa). A Nuclear localization signal motif is present at residues 184–188; sequence VLPKA. Phosphoserine is present on residues serine 190 and serine 213. Phosphoserine; by MAPK1 is present on serine 293. Residues 333–371 are disordered; it reads AAQVPFAPPRGSPSAPSPPVPCGDFPDCTYPPEGDPKED. A compositionally biased stretch (pro residues) spans 338-353; sequence FAPPRGSPSAPSPPVP. Serine 344 bears the Phosphoserine; by MAPK mark. Lysine 387 is covalently cross-linked (Glycyl lysine isopeptide (Lys-Gly) (interchain with G-Cter in SUMO); alternate). Lysine 387 participates in a covalent cross-link: Glycyl lysine isopeptide (Lys-Gly) (interchain with G-Cter in ubiquitin); alternate. Serine 399 bears the Phosphoserine; by CDK2 mark. The segment at 412 to 435 is disordered; sequence TFPDFPLPPRPPRAPPSRPGEAAV. Over residues 416-429 the composition is skewed to pro residues; it reads FPLPPRPPRAPPSR. The interval 450-536 is AF1; mediates transcriptional activation; the sequence is SALECILYKA…VYPPYLNYLR (87 aa). Residue lysine 521 forms a Glycyl lysine isopeptide (Lys-Gly) (interchain with G-Cter in SUMO) linkage. 2 consecutive NR C4-type zinc fingers follow at residues 557–577 and 593–617; these read CLICGDEASGCHYGVLTCGSC and CAGRNDCIVDKIRRKNCPACRLRKC. The nuclear receptor DNA-binding region spans 557–629; that stretch reads CLICGDEASG…AGMVLGGRKF (73 aa). The residue at position 666 (serine 666) is a Phosphoserine. The region spanning 669-903 is the NR LBD domain; it reads QEIQLVPPLI…EFPEMMSEVI (235 aa). Residues 677 to 923 are AF2; mediates transcriptional activation; the sequence is LINLLMSIEP…MVKPLLFHKK (247 aa). Arginine 756 serves as a coordination point for progesterone.

Belongs to the nuclear hormone receptor family. NR3 subfamily. Interacts with SMARD1 and UNC45A. Interacts with CUEDC2; the interaction promotes ubiquitination, decreases sumoylation, and represses transcriptional activity. Interacts with PIAS3; the interaction promotes sumoylation of PR in a hormone-dependent manner, inhibits DNA-binding, and alters nuclear export. Interacts with SP1; the interaction requires ligand-induced phosphorylation on Ser-344. Interacts with PRMT2. Isoform A interacts with NCOR2. Isoform B (but not isoform A) interacts with NCOA2 and NCOA1. Isoform B (but not isoform A) interacts with KLF9. Interacts with GTF2B. Phosphorylated on multiple serine sites. Several of these sites are hormone-dependent. Phosphorylation on Ser-293 is highly hormone-dependent and modulates ubiquitination and sumoylation on Lys-387. Phosphorylation on Ser-344 also requires induction by hormone. Basal phosphorylation on Ser-82, Ser-190 and Ser-399 is increased in response to progesterone and can be phosphorylated in vitro by the CDK2-A1 complex. Increased levels of phosphorylation on Ser-399 also in the presence of EGF, heregulin, IGF, PMA and FBS. Phosphorylation at this site by CDK2 is ligand-independent, and increases nuclear translocation and transcriptional activity. Phosphorylation at Ser-293, but not at Ser-190, is impaired during the G(2)/M phase of the cell cycle. Phosphorylation on Ser-344 by ERK1/2 MAPK is required for interaction with SP1. Post-translationally, sumoylation is hormone-dependent and represses transcriptional activity. Sumoylation on all three sites is enhanced by PIAS3. Desumoylated by SENP1. Sumoylation on Lys-387, the main site of sumoylation, is repressed by ubiquitination on the same site, and modulated by phosphorylation at Ser-293. In terms of processing, ubiquitination is hormone-dependent and represses sumoylation on the same site. Promoted by MAPK-mediated phosphorylation on Ser-293. Ubiquitinated by UBR5, leading to its degradation: UBR5 specifically recognizes and binds ligand-bound PGR when it is not associated with coactivators (NCOAs). In presence of NCOAs, the UBR5-degron is not accessible, preventing its ubiquitination and degradation. Palmitoylated by ZDHHC7 and ZDHHC21. Palmitoylation is required for plasma membrane targeting and for rapid intracellular signaling via ERK and AKT kinases and cAMP generation. Isoform A and isoform B are expressed in the pituitary.

It is found in the nucleus. It localises to the cytoplasm. Its function is as follows. The steroid hormones and their receptors are involved in the regulation of eukaryotic gene expression and affect cellular proliferation and differentiation in target tissues. Depending on the isoform, progesterone receptor functions as a transcriptional activator or repressor. Ligand-dependent transdominant repressor of steroid hormone receptor transcriptional activity including repression of its isoform B, MR and ER. Transrepressional activity may involve recruitment of corepressor NCOR2. In terms of biological role, transcriptional activator of several progesteron-dependent promoters in a variety of cell types. Involved in activation of SRC-dependent MAPK signaling on hormone stimulation. This chain is Progesterone receptor (Pgr), found in Rattus norvegicus (Rat).